The following is a 456-amino-acid chain: Asparagine--tRNA ligase (456 aa).

Belongs to the class-II aminoacyl-tRNA synthetase family. Homodimer.

Its subcellular location is the cytoplasm. The enzyme catalyses tRNA(Asn) + L-asparagine + ATP = L-asparaginyl-tRNA(Asn) + AMP + diphosphate + H(+). This Mycoplasma genitalium (strain ATCC 33530 / DSM 19775 / NCTC 10195 / G37) (Mycoplasmoides genitalium) protein is Asparagine--tRNA ligase.